Consider the following 417-residue polypeptide: Ribonucleoside-diphosphate reductase small chain (417 aa).

Residues D168, E199, and H202 each coordinate Fe cation. The active site involves Y206. 3 residues coordinate Fe cation: E261, E297, and H300.

Belongs to the ribonucleoside diphosphate reductase small chain family. Heterotetramer composed of a homodimer of the large subunit (R1) and a homodimer of the small subunit (R2). Larger multisubunit protein complex are also active, composed of (R1)n(R2)n. Requires Fe cation as cofactor.

It catalyses the reaction a 2'-deoxyribonucleoside 5'-diphosphate + [thioredoxin]-disulfide + H2O = a ribonucleoside 5'-diphosphate + [thioredoxin]-dithiol. Functionally, ribonucleoside-diphosphate reductase holoenzyme provides the precursors necessary for viral DNA synthesis. Allows virus growth in non-dividing cells. Catalyzes the biosynthesis of deoxyribonucleotides from the corresponding ribonucleotides. The sequence is that of Ribonucleoside-diphosphate reductase small chain (RNR2) from Acanthamoeba polyphaga mimivirus (APMV).